The primary structure comprises 568 residues: Alpha-1,3-galactosidase A (568 aa).

The signal sequence occupies residues 1–17; sequence MMSVWFIQLAIFAQSRI. 6 PbH1 repeats span residues 87–125, 243–265, 299–321, 409–431, 432–454, and 465–486; these read LYLNTLKNITIDGCGSTLLMNGEMTSFVLDKCEGIVLKN, SKGILLENINFYYLGNFGVVCQY, RGMIDIKNSRFIGAHDDPINIHG, TPEVRITNNYFARVPTRGILITT, RRKSLIEGNTFYGMQMSGIFVAD, and VHDLTIRQNTFLNCGEPIISID.

Belongs to the glycosyl hydrolase 110 family. A subfamily.

It catalyses the reaction Hydrolysis of terminal, non-reducing branched (1-&gt;3)-alpha-D-galactosidic residues, producing free D-galactose.. The catalysed reaction is Hydrolysis of terminal, non-reducing alpha-D-galactose residues in alpha-D-galactosides, including galactose oligosaccharides, galactomannans and galactolipids.. Functionally, alpha-galactosidase that specifically removes branched alpha-1,3-linked galactose residues present in blood group B antigens. Has no activity toward linear alpha-1,3-linked galactose residues. The polypeptide is Alpha-1,3-galactosidase A (glaA) (Bacteroides thetaiotaomicron (strain ATCC 29148 / DSM 2079 / JCM 5827 / CCUG 10774 / NCTC 10582 / VPI-5482 / E50)).